The sequence spans 194 residues: Putative 3-methyladenine DNA glycosylase (194 aa).

It belongs to the DNA glycosylase MPG family.

This chain is Putative 3-methyladenine DNA glycosylase, found in Chlamydia felis (strain Fe/C-56) (Chlamydophila felis).